Consider the following 313-residue polypeptide: Olfactory receptor 4M1 (313 aa).

Topologically, residues 1-25 (METANYTKVTEFVLTGLSQTREVQL) are extracellular. The N-linked (GlcNAc...) asparagine glycan is linked to Asn5. The helical transmembrane segment at 26-49 (VLFVIFLSFYLFILPGNILIICTI) threads the bilayer. Over 50–57 (RLDPHLTS) the chain is Cytoplasmic. Residues 58–79 (PMYFLLANLALLDIWYSSITAP) form a helical membrane-spanning segment. Topologically, residues 80 to 100 (KMLIDFFVERKIISFGGCIAQ) are extracellular. Cys97 and Cys189 are joined by a disulfide. Residues 101–120 (LFFLHFVGASEMFLLTVMAY) form a helical membrane-spanning segment. Over 121 to 139 (DRYAAICRPLHYATIMNRR) the chain is Cytoplasmic. Residues 140–158 (LCCILVALSWMGGFIHSII) form a helical membrane-spanning segment. At 159-195 (QVALIVRLPFCGPNELDSYFCDITQVVRIACANTFPE) the chain is on the extracellular side. The chain crosses the membrane as a helical span at residues 196–219 (ELVMICSSGLISVVCFIALLMSYA). Over 220-237 (FLLALLKKHSGSGENTNR) the chain is Cytoplasmic. The helical transmembrane segment at 238–260 (AMSTCYSHITIVVLMFGPSIYIY) threads the bilayer. Residues 261 to 271 (ARPFDSFSLDK) are Extracellular-facing. The helical transmembrane segment at 272–291 (VVSVFHTVIFPLLNPIIYTL) threads the bilayer. The Cytoplasmic portion of the chain corresponds to 292 to 313 (RNKEVKAAMRKVVTKYILCEEK).

The protein belongs to the G-protein coupled receptor 1 family. Highly expressed in the testis and olfactory bulb.

It localises to the cell membrane. In terms of biological role, olfactory receptor that acts as a receptor of Asprosin hormone, potentially at the surface of hepatocytes and may help to promote hepatocyte glucose release. The polypeptide is Olfactory receptor 4M1 (Homo sapiens (Human)).